Consider the following 483-residue polypeptide: UDP-glucosyl transferase 73B2 (483 aa).

Histidine 22 functions as the Proton acceptor in the catalytic mechanism. An anthocyanidin is bound at residue histidine 22. The active-site Charge relay is aspartate 133. Positions 355, 357, 372, 375, 376, 377, and 380 each coordinate UDP-alpha-D-glucose. Position 395 (alanine 395) interacts with an anthocyanidin. UDP-alpha-D-glucose is bound by residues glutamate 396 and glutamine 397.

This sequence belongs to the UDP-glycosyltransferase family. Expressed in roots and flowers.

The catalysed reaction is a 7-O-hydroxy-flavonol + UDP-alpha-D-glucose = a flavonol 7-O-beta-D-glucoside + UDP + H(+). Its pathway is secondary metabolite biosynthesis; flavonoid biosynthesis. Catalyzes the glycosylation of flavonoids from UDP-glucose. Uses a wide range of flavonoid substrates including flavonols (quercetin, kaempferol, isorhamnetin, 3-OH 7,2',4'-MeO-flavone), flavones (luteolin, apigenin), flavanones (naringenin, hesperetin), flavanonols (taxifolin), isoflavones (genistein, daidzein), flavonol glycosides (quercitrin, isoquercitrin, rutin), and chalcones (isoliquiritigenin). Specific for the C-7 position, with a 20-fold lower activity for the C-3 position. The polypeptide is UDP-glucosyl transferase 73B2 (UGT73B2) (Arabidopsis thaliana (Mouse-ear cress)).